A 1192-amino-acid chain; its full sequence is DNA ligase 1 (1192 aa).

2 disordered regions span residues 29-257 (ELNK…KEKE) and 280-517 (EKEL…KSTQ). Residues 42–56 (EAVVKEKVEKKEKKE) are compositionally biased toward basic and acidic residues. Positions 70 to 113 (EEEEEEQEEQDGEEEQEEEEEYQQQDEEIEEDINGEEEMELDEN) are enriched in acidic residues. The segment covering 141-155 (KTIENKETKKPEKQS) has biased composition (basic and acidic residues). Acidic residues predominate over residues 172–198 (DDEEDEEDENKTDDNDLDDMLDDDSDN). Composition is skewed to basic and acidic residues over residues 199 to 257 (EKDS…KEKE) and 280 to 368 (EKEL…RANA). Composition is skewed to low complexity over residues 371 to 382 (KSSVPTSTSKNS) and 410 to 434 (STTT…ISSP). Positions 435–467 (SKKEEKEVITSKKQVEATKVEVKKEKEKEKEKE) are enriched in basic and acidic residues. The segment covering 468–511 (KEDDEEEEEEEEDDDEKLEDIDEEEYEEEEEEDEEGISENEEEE) has biased composition (acidic residues). The segment at 724 to 733 (KLRIGLAERS) is interaction with target DNA. Glu842 is a binding site for ATP. The active-site N6-AMP-lysine intermediate is Lys844. Arg849 and Arg865 together coordinate ATP. Glu897 is a Mg(2+) binding site. The interval 918-920 (ARK) is interaction with target DNA. Glu996 provides a ligand contact to Mg(2+). ATP is bound by residues Lys1001, Arg1014, and Lys1020. The tract at residues 1157 to 1192 (DKSPEDATSSDQVVDMYQNQKINSQSSKINEKDEDY) is disordered. A compositionally biased stretch (polar residues) spans 1162–1184 (DATSSDQVVDMYQNQKINSQSSK).

This sequence belongs to the ATP-dependent DNA ligase family. It depends on Mg(2+) as a cofactor.

Its subcellular location is the nucleus. It catalyses the reaction ATP + (deoxyribonucleotide)n-3'-hydroxyl + 5'-phospho-(deoxyribonucleotide)m = (deoxyribonucleotide)n+m + AMP + diphosphate.. DNA ligase that seals nicks in double-stranded DNA during DNA replication, DNA recombination and DNA repair. The protein is DNA ligase 1 (lig1) of Dictyostelium discoideum (Social amoeba).